Here is a 348-residue protein sequence, read N- to C-terminus: Aspartate carbamoyltransferase catalytic subunit (348 aa).

2 residues coordinate carbamoyl phosphate: arginine 59 and threonine 60. Residue lysine 87 coordinates L-aspartate. Residues arginine 109, histidine 142, and glutamine 145 each coordinate carbamoyl phosphate. L-aspartate-binding residues include arginine 182 and arginine 253. Residues glycine 294 and proline 295 each coordinate carbamoyl phosphate.

Belongs to the aspartate/ornithine carbamoyltransferase superfamily. ATCase family. In terms of assembly, heterododecamer (2C3:3R2) of six catalytic PyrB chains organized as two trimers (C3), and six regulatory PyrI chains organized as three dimers (R2).

It catalyses the reaction carbamoyl phosphate + L-aspartate = N-carbamoyl-L-aspartate + phosphate + H(+). The protein operates within pyrimidine metabolism; UMP biosynthesis via de novo pathway; (S)-dihydroorotate from bicarbonate: step 2/3. In terms of biological role, catalyzes the condensation of carbamoyl phosphate and aspartate to form carbamoyl aspartate and inorganic phosphate, the committed step in the de novo pyrimidine nucleotide biosynthesis pathway. This is Aspartate carbamoyltransferase catalytic subunit from Prochlorococcus marinus (strain MIT 9303).